We begin with the raw amino-acid sequence, 91 residues long: Cell division protein FtsB (91 aa).

Residues Met1 to Trp3 lie on the Cytoplasmic side of the membrane. Residues Pro4–Leu21 traverse the membrane as a helical segment. Topologically, residues Gly22 to Pro91 are periplasmic. The stretch at Arg28–Glu74 forms a coiled coil.

Belongs to the FtsB family. As to quaternary structure, part of a complex composed of FtsB, FtsL and FtsQ.

It is found in the cell inner membrane. Functionally, essential cell division protein. May link together the upstream cell division proteins, which are predominantly cytoplasmic, with the downstream cell division proteins, which are predominantly periplasmic. The polypeptide is Cell division protein FtsB (Aromatoleum aromaticum (strain DSM 19018 / LMG 30748 / EbN1) (Azoarcus sp. (strain EbN1))).